The primary structure comprises 315 residues: Homoserine O-succinyltransferase (315 aa).

The active-site Acyl-thioester intermediate is the Cys-142. Positions 163 and 192 each coordinate substrate. His-235 acts as the Proton acceptor in catalysis. Residue Glu-237 is part of the active site. Arg-249 lines the substrate pocket.

This sequence belongs to the MetA family.

It localises to the cytoplasm. It carries out the reaction L-homoserine + succinyl-CoA = O-succinyl-L-homoserine + CoA. The protein operates within amino-acid biosynthesis; L-methionine biosynthesis via de novo pathway; O-succinyl-L-homoserine from L-homoserine: step 1/1. Its function is as follows. Transfers a succinyl group from succinyl-CoA to L-homoserine, forming succinyl-L-homoserine. This is Homoserine O-succinyltransferase from Shewanella piezotolerans (strain WP3 / JCM 13877).